Consider the following 504-residue polypeptide: MTVPALASVSGLLQVASLLGLLLLLLKAAQLYLRRQWLLKALQQFPSPPSHWLYGHSREFQEESELQPLLKRVEKYPSACARWLWGTRAMVLVYDPDYMKVVLARSEPKAPVLYRLLIPWIGCGLLLLNGQMWFQRRRMLTPAFHYDILKPYVGLMAKSVQVMLDKWEQLVAQDPRLEIVGPVSLMTLDTIMKCAFSHQGSAQTDGDSQSYIQAIWDLKNLIFSRLRSAFLQNDIIYRLSPEGRQCQRACQKVHQHTDRVIQLRKTHLQKEGEMENVKKKRHLDFLDILLFARMENGNSLSDTDVRAEVDTFMAAGHDSTASGISWVLYALASNPEHQQRCREEIQGLLGDGTSITWDHLDQMPYTTMCIKEALRLYPPVPSVGRELSKPITFPDGRSLPAGIILSLSIYGLHHNPQVWPNPEEFDPSRFAPGSARHSHAFMPFSGGSRNCIGKQFAMNEMKVVVALTLLRFELAPDPSRIPVPIQGIVLKSKNGIHLNLRKIP.

The next 2 helical transmembrane spans lie at 6 to 26 and 110 to 130; these read LASVSGLLQVASLLGLLLLLL and APVLYRLLIPWIGCGLLLLNG. C451 lines the heme pocket.

Belongs to the cytochrome P450 family. Heme is required as a cofactor. As to expression, primarily expressed in liver. Low expression in kidney.

The protein resides in the endoplasmic reticulum membrane. The catalysed reaction is taurochenodeoxycholate + reduced [NADPH--hemoprotein reductase] + O2 = taurohyocholate + oxidized [NADPH--hemoprotein reductase] + H2O + H(+). The enzyme catalyses lithocholate + reduced [NADPH--hemoprotein reductase] + O2 = hyodeoxycholate + oxidized [NADPH--hemoprotein reductase] + H2O + H(+). Its function is as follows. Catalyzes the 6 alpha hydroxylation oxidation of taurodeoxycholate to produce the pig specific bile acid taurohyocholic acid. The polypeptide is Taurochenodeoxycholic 6 alpha-hydroxylase (CYP4A21) (Sus scrofa (Pig)).